The primary structure comprises 235 residues: NAD(P)H-hydrate epimerase (235 aa).

The region spanning A12–I218 is the YjeF N-terminal domain. N62–D66 contacts (6S)-NADPHX. Residues N63 and D127 each contribute to the K(+) site. Residues G131–D137 and D161 contribute to the (6S)-NADPHX site. K(+) is bound at residue S164.

It belongs to the NnrE/AIBP family. It depends on K(+) as a cofactor.

It carries out the reaction (6R)-NADHX = (6S)-NADHX. The enzyme catalyses (6R)-NADPHX = (6S)-NADPHX. In terms of biological role, catalyzes the epimerization of the S- and R-forms of NAD(P)HX, a damaged form of NAD(P)H that is a result of enzymatic or heat-dependent hydration. This is a prerequisite for the S-specific NAD(P)H-hydrate dehydratase to allow the repair of both epimers of NAD(P)HX. The polypeptide is NAD(P)H-hydrate epimerase (Dictyostelium discoideum (Social amoeba)).